A 225-amino-acid polypeptide reads, in one-letter code: Tryptophan synthase beta chain (225 aa).

Belongs to the TrpB family. In terms of assembly, tetramer of two alpha and two beta chains. Pyridoxal 5'-phosphate is required as a cofactor.

The catalysed reaction is (1S,2R)-1-C-(indol-3-yl)glycerol 3-phosphate + L-serine = D-glyceraldehyde 3-phosphate + L-tryptophan + H2O. Its pathway is amino-acid biosynthesis; L-tryptophan biosynthesis; L-tryptophan from chorismate: step 5/5. In terms of biological role, the beta subunit is responsible for the synthesis of L-tryptophan from indole and L-serine. This is Tryptophan synthase beta chain (trpB) from Buchnera aphidicola subsp. Rhopalosiphum padi.